A 193-amino-acid chain; its full sequence is NADH-quinone oxidoreductase subunit B (193 aa).

Cys-72, Cys-73, Cys-137, and Cys-167 together coordinate [4Fe-4S] cluster.

The protein belongs to the complex I 20 kDa subunit family. In terms of assembly, NDH-1 is composed of 14 different subunits. Subunits NuoB, C, D, E, F, and G constitute the peripheral sector of the complex. It depends on [4Fe-4S] cluster as a cofactor.

It localises to the cell inner membrane. The enzyme catalyses a quinone + NADH + 5 H(+)(in) = a quinol + NAD(+) + 4 H(+)(out). NDH-1 shuttles electrons from NADH, via FMN and iron-sulfur (Fe-S) centers, to quinones in the respiratory chain. The immediate electron acceptor for the enzyme in this species is believed to be ubiquinone. Couples the redox reaction to proton translocation (for every two electrons transferred, four hydrogen ions are translocated across the cytoplasmic membrane), and thus conserves the redox energy in a proton gradient. The protein is NADH-quinone oxidoreductase subunit B of Caulobacter vibrioides (strain ATCC 19089 / CIP 103742 / CB 15) (Caulobacter crescentus).